The sequence spans 336 residues: Dihydroorotate dehydrogenase (quinone) (336 aa).

FMN contacts are provided by residues 62 to 66 (AGLDK) and Thr86. A substrate-binding site is contributed by Lys66. Residue 111–115 (NRMGF) coordinates substrate. Residues Asn139 and Asn172 each contribute to the FMN site. Residue Asn172 coordinates substrate. Ser175 functions as the Nucleophile in the catalytic mechanism. Asn177 contacts substrate. The FMN site is built by Lys217 and Thr245. Substrate is bound at residue 246–247 (NT). FMN-binding positions include Gly268, Gly297, and 318–319 (YS).

The protein belongs to the dihydroorotate dehydrogenase family. Type 2 subfamily. In terms of assembly, monomer. FMN is required as a cofactor.

The protein resides in the cell membrane. The enzyme catalyses (S)-dihydroorotate + a quinone = orotate + a quinol. Its pathway is pyrimidine metabolism; UMP biosynthesis via de novo pathway; orotate from (S)-dihydroorotate (quinone route): step 1/1. Functionally, catalyzes the conversion of dihydroorotate to orotate with quinone as electron acceptor. The protein is Dihydroorotate dehydrogenase (quinone) of Proteus mirabilis (strain HI4320).